We begin with the raw amino-acid sequence, 436 residues long: Adenylosuccinate synthetase (436 aa).

Residues 12 to 18 (GDEGKGK) and 40 to 42 (GHT) contribute to the GTP site. The active-site Proton acceptor is Asp13. Asp13 and Gly40 together coordinate Mg(2+). Residues 13–16 (DEGK), 38–41 (NAGH), Thr128, Arg142, Gln223, Thr238, and Arg302 each bind IMP. His41 (proton donor) is an active-site residue. 298 to 304 (TTTGRRR) serves as a coordination point for substrate. Residues Arg304, 330–332 (KLD), and 412–414 (SLG) each bind GTP.

Belongs to the adenylosuccinate synthetase family. Homodimer. The cofactor is Mg(2+).

The protein localises to the cytoplasm. The catalysed reaction is IMP + L-aspartate + GTP = N(6)-(1,2-dicarboxyethyl)-AMP + GDP + phosphate + 2 H(+). The protein operates within purine metabolism; AMP biosynthesis via de novo pathway; AMP from IMP: step 1/2. Its function is as follows. Plays an important role in the de novo pathway of purine nucleotide biosynthesis. Catalyzes the first committed step in the biosynthesis of AMP from IMP. The sequence is that of Adenylosuccinate synthetase from Prochlorococcus marinus subsp. pastoris (strain CCMP1986 / NIES-2087 / MED4).